We begin with the raw amino-acid sequence, 66 residues long: GRDAYIAQPENCVYECAKSSYCNDLCTKNGAKSGYCQWLGRWGNACYCIDLPDKVPIRIEGKCHFA.

In terms of domain architecture, LCN-type CS-alpha/beta spans 2–64 (RDAYIAQPEN…VPIRIEGKCH (63 aa)). Intrachain disulfides connect Cys-12/Cys-63, Cys-16/Cys-36, Cys-22/Cys-46, and Cys-26/Cys-48.

It belongs to the long (4 C-C) scorpion toxin superfamily. Sodium channel inhibitor family. Alpha subfamily. Expressed by the venom gland.

It is found in the secreted. In terms of biological role, alpha toxins bind voltage-independently at site-3 of sodium channels (Nav) and inhibit the inactivation of the activated channels, thereby blocking neuronal transmission. The polypeptide is Toxin BomPI (Buthus occitanus mardochei (Moroccan scorpion)).